A 405-amino-acid polypeptide reads, in one-letter code: Terpene cyclase pbrA (405 aa).

Mg(2+) is bound by residues aspartate 103, glutamate 168, asparagine 229, serine 233, glutamate 237, and aspartate 241. The D(D/E)XX(D/E) motif motif lies at 103–108 (DDEISS). The NSE motif signature appears at 227 to 237 (LVNDLFSFYKE). Positions 316–323 (EDLGGSSA) match the WxxxxxRY motif motif.

It belongs to the trichodiene synthase family. Requires Mg(2+) as cofactor.

Its pathway is secondary metabolite biosynthesis; terpenoid biosynthesis. Terpene cyclase; part of the gene cluster that mediates the biosynthesis of the sesquiterpenoid aspterric acid (AA), an inhibitor of dihydroxy-acid dehydratase (DHAD) effective as an herbicide. PbrA cyclizes farnesyl diphosphate (FPP) to produce (-)-daucane. The cytochrome P450 monooxygenase pbrBB then converts (-)-daucane into the alpha-epoxy carboxylate intermediate which is further converted into the tricyclic aspterric acid by the cytochrome P450 monooxygenase pbrC. The protein is Terpene cyclase pbrA of Penicillium brasilianum.